The sequence spans 134 residues: Protein LctB (134 aa).

This chain is Protein LctB (lctB), found in Geobacillus stearothermophilus (Bacillus stearothermophilus).